The primary structure comprises 765 residues: 5-methyltetrahydropteroyltriglutamate--homocysteine methyltransferase (765 aa).

5-methyltetrahydropteroyltri-L-glutamate-binding positions include 18–21 (REWK) and Lys-114. L-homocysteine contacts are provided by residues 437–439 (IGS) and Glu-490. Residues 437–439 (IGS) and Glu-490 each bind L-methionine. Trp-567 contacts 5-methyltetrahydropteroyltri-L-glutamate. Residue Asp-605 participates in L-homocysteine binding. Position 605 (Asp-605) interacts with L-methionine. Glu-611 provides a ligand contact to 5-methyltetrahydropteroyltri-L-glutamate. Zn(2+) contacts are provided by His-647, Cys-649, and Glu-671. Residue His-700 is the Proton donor of the active site. Position 732 (Cys-732) interacts with Zn(2+).

This sequence belongs to the vitamin-B12 independent methionine synthase family. Zn(2+) is required as a cofactor.

It carries out the reaction 5-methyltetrahydropteroyltri-L-glutamate + L-homocysteine = tetrahydropteroyltri-L-glutamate + L-methionine. It functions in the pathway amino-acid biosynthesis; L-methionine biosynthesis via de novo pathway; L-methionine from L-homocysteine (MetE route): step 1/1. Functionally, catalyzes the transfer of a methyl group from 5-methyltetrahydrofolate to homocysteine resulting in methionine formation. The polypeptide is 5-methyltetrahydropteroyltriglutamate--homocysteine methyltransferase (Listeria innocua serovar 6a (strain ATCC BAA-680 / CLIP 11262)).